Reading from the N-terminus, the 348-residue chain is GTPase Obg (348 aa).

The Obg domain maps to Met1–Leu160. Positions Arg120 to Gly145 are disordered. Positions Ala161 to Gly328 constitute an OBG-type G domain. GTP is bound by residues Gly167–Ser174, Phe192–Arg196, Asp213–Gly216, Asn280–Asp283, and Ser309–Ala311. The Mg(2+) site is built by Ser174 and Thr194. The tract at residues Ala326–Ile348 is disordered.

This sequence belongs to the TRAFAC class OBG-HflX-like GTPase superfamily. OBG GTPase family. Monomer. It depends on Mg(2+) as a cofactor.

The protein resides in the cytoplasm. In terms of biological role, an essential GTPase which binds GTP, GDP and possibly (p)ppGpp with moderate affinity, with high nucleotide exchange rates and a fairly low GTP hydrolysis rate. Plays a role in control of the cell cycle, stress response, ribosome biogenesis and in those bacteria that undergo differentiation, in morphogenesis control. The chain is GTPase Obg from Sphingopyxis alaskensis (strain DSM 13593 / LMG 18877 / RB2256) (Sphingomonas alaskensis).